A 104-amino-acid chain; its full sequence is Viral histone-like protein (104 aa).

It belongs to the bacterial histone-like protein family. As to quaternary structure, homodimer.

The protein localises to the virion. With respect to regulation, stilbene derivatives SD1 and SD4 disrupt the binding between pA104R and DNA and inhibit the viral replication in primary alveolar macrophages. Functionally, DNA-binding protein that plays a critical role in nucleoid compaction, genome replication and DNA replication and transcription. Binds to both ssDNA and dsDNA with a binding site covering about 15 nucleotides. Displays DNA-supercoiling activity only when associated with the viral DNA topoisomerase 2. This African swine fever virus (strain Badajoz 1971 Vero-adapted) (Ba71V) protein is Viral histone-like protein.